Consider the following 242-residue polypeptide: Ribosomal RNA small subunit methyltransferase G (242 aa).

S-adenosyl-L-methionine-binding positions include Gly78, Leu83, 130-131, and Arg151; that span reads AE.

It belongs to the methyltransferase superfamily. RNA methyltransferase RsmG family.

The protein localises to the cytoplasm. Its function is as follows. Specifically methylates the N7 position of guanine in position 518 of 16S rRNA. The protein is Ribosomal RNA small subunit methyltransferase G of Salinispora arenicola (strain CNS-205).